A 229-amino-acid chain; its full sequence is Uracil-DNA glycosylase (229 aa).

Asp-64 serves as the catalytic Proton acceptor.

The protein belongs to the uracil-DNA glycosylase (UDG) superfamily. UNG family.

The protein localises to the cytoplasm. It carries out the reaction Hydrolyzes single-stranded DNA or mismatched double-stranded DNA and polynucleotides, releasing free uracil.. Its function is as follows. Excises uracil residues from the DNA which can arise as a result of misincorporation of dUMP residues by DNA polymerase or due to deamination of cytosine. This Escherichia coli O45:K1 (strain S88 / ExPEC) protein is Uracil-DNA glycosylase.